The primary structure comprises 658 residues: Glycogen debranching enzyme (658 aa).

Aspartate 336 (nucleophile) is an active-site residue. Glutamate 371 functions as the Proton donor in the catalytic mechanism. The segment at 460–484 is disordered; sequence ANGEENRDGSNNNHSNNHGKEGLGG.

The protein belongs to the glycosyl hydrolase 13 family.

It carries out the reaction Hydrolysis of (1-&gt;6)-alpha-D-glucosidic linkages to branches with degrees of polymerization of three or four glucose residues in limit dextrin.. It functions in the pathway glycan degradation; glycogen degradation. In terms of biological role, removes maltotriose and maltotetraose chains that are attached by 1,6-alpha-linkage to the limit dextrin main chain, generating a debranched limit dextrin. In Escherichia fergusonii (strain ATCC 35469 / DSM 13698 / CCUG 18766 / IAM 14443 / JCM 21226 / LMG 7866 / NBRC 102419 / NCTC 12128 / CDC 0568-73), this protein is Glycogen debranching enzyme.